The sequence spans 416 residues: Glutamyl-tRNA reductase (416 aa).

Residues Thr49–Arg52, Ser105, Glu110–Gln112, and Gln116 contribute to the substrate site. The active-site Nucleophile is Cys50. Residue Gly185–Ile190 participates in NADP(+) binding.

Belongs to the glutamyl-tRNA reductase family. Homodimer.

The enzyme catalyses (S)-4-amino-5-oxopentanoate + tRNA(Glu) + NADP(+) = L-glutamyl-tRNA(Glu) + NADPH + H(+). Its pathway is porphyrin-containing compound metabolism; protoporphyrin-IX biosynthesis; 5-aminolevulinate from L-glutamyl-tRNA(Glu): step 1/2. Catalyzes the NADPH-dependent reduction of glutamyl-tRNA(Glu) to glutamate 1-semialdehyde (GSA). In Shewanella baltica (strain OS223), this protein is Glutamyl-tRNA reductase.